Here is a 185-residue protein sequence, read N- to C-terminus: Ribosome-recycling factor (185 aa).

The protein belongs to the RRF family.

It is found in the cytoplasm. Functionally, responsible for the release of ribosomes from messenger RNA at the termination of protein biosynthesis. May increase the efficiency of translation by recycling ribosomes from one round of translation to another. The protein is Ribosome-recycling factor of Bacillus cereus (strain G9842).